The primary structure comprises 356 residues: Peptide chain release factor 1 (356 aa).

The residue at position 235 (Gln235) is an N5-methylglutamine.

The protein belongs to the prokaryotic/mitochondrial release factor family. In terms of processing, methylated by PrmC. Methylation increases the termination efficiency of RF1.

Its subcellular location is the cytoplasm. Its function is as follows. Peptide chain release factor 1 directs the termination of translation in response to the peptide chain termination codons UAG and UAA. The protein is Peptide chain release factor 1 of Mycobacteroides abscessus (strain ATCC 19977 / DSM 44196 / CCUG 20993 / CIP 104536 / JCM 13569 / NCTC 13031 / TMC 1543 / L948) (Mycobacterium abscessus).